We begin with the raw amino-acid sequence, 149 residues long: NPC intracellular cholesterol transporter 2 (149 aa).

Residues 1 to 21 form the signal peptide; the sequence is MRLLVAAFLLLALGDLGPGGA. 3 cysteine pairs are disulfide-bonded: Cys27–Cys140, Cys42–Cys47, and Cys93–Cys99. N-linked (GlcNAc...) asparagine glycosylation occurs at Asn58. Residue Lys116 is modified to N6-acetyllysine.

The protein belongs to the NPC2 family. As to quaternary structure, interacts with NPC1 (via the second lumenal domain) in a cholestrol-dependent manner. Interacts with NUS1/NgBR, the interaction stabilizes NCP2 and regulates cholesterol trafficking. Interacts with DHDDS. Interacts with NEDD4L (via C2 domain). Interacts with NPC1L1. Epididymis. High levels are found in the caput and corpus regions. Weaker levels in the distal cauda and in the efferent ducts.

The protein resides in the secreted. The protein localises to the endoplasmic reticulum. Its subcellular location is the lysosome. The enzyme catalyses cholesterol(in) = cholesterol(out). Its function is as follows. Intracellular cholesterol transporter which acts in concert with NPC1 and plays an important role in the egress of cholesterol from the lysosomal compartment. Unesterified cholesterol that has been released from LDLs in the lumen of the late endosomes/lysosomes is transferred by NPC2 to the cholesterol-binding pocket in the N-terminal domain of NPC1. May bind and mobilize cholesterol that is associated with membranes. NPC2 binds cholesterol with a 1:1 stoichiometry. Can bind a variety of sterols, including lathosterol, desmosterol and the plant sterols stigmasterol and beta-sitosterol. The secreted form of NCP2 regulates biliary cholesterol secretion via stimulation of ABCG5/ABCG8-mediated cholesterol transport. This chain is NPC intracellular cholesterol transporter 2, found in Canis lupus familiaris (Dog).